The primary structure comprises 71 residues: Delta-actitoxin-Avd2b 2 (71 aa).

Positions 1–20 are cleaved as a signal peptide; it reads MNRLLVFLMLGAAFMLVVSA. Positions 21–41 are excised as a propeptide; it reads NDAYGDEPAFKDLNQGDESLG. Disulfide bonds link C46/C61, C47/C55, and C49/C66.

This sequence belongs to the sea anemone short toxin (type III) family.

The protein localises to the secreted. It localises to the nematocyst. In terms of biological role, voltage-gated sodium channel (Nav) inhibitor. 1 uM completely inhibits insect voltage-gated sodium channel inactivation (DmNav1 from D.melanogaster). The sequence is that of Delta-actitoxin-Avd2b 2 from Anemonia viridis (Snakelocks anemone).